The sequence spans 1328 residues: Peroxidasin homolog pxn-2 (1328 aa).

A signal peptide spans 1–16 (MLLEFLLLIGISLSTA). The region spanning 17–45 (CPSECRCAGLDVHCEGKNLTAIPGHIPIA) is the LRRNT domain. An N-linked (GlcNAc...) asparagine glycan is attached at Asn-34. 6 LRR repeats span residues 42 to 66 (IPIA…NFQA), 67 to 90 (LPNL…LLDS), 92 to 114 (PGLK…STAP), 116 to 137 (ALVS…LVSH), 138 to 161 (SPYM…FFNS), and 164 to 191 (VPTL…QFAD). An N-linked (GlcNAc...) asparagine glycan is attached at Asn-77. An N-linked (GlcNAc...) asparagine glycan is attached at Asn-220. The segment at 305–332 (KKMQASSSTEPPITTTTMEPMTTSTMDS) is disordered. Low complexity predominate over residues 310-332 (SSSTEPPITTTTMEPMTTSTMDS). Ig-like C2-type domains are found at residues 346 to 438 (PEID…FSVS) and 445 to 532 (PVII…ANLL). Cys-373 and Cys-422 are joined by a disulfide. Residues Asn-403 and Asn-455 are each glycosylated (N-linked (GlcNAc...) asparagine). Cys-466 and Cys-516 are oxidised to a cystine. N-linked (GlcNAc...) asparagine glycosylation occurs at Asn-630. Cys-660 and Cys-676 are joined by a disulfide. Asp-754 contributes to the heme b binding site. Catalysis depends on His-755, which acts as the Proton acceptor. A Ca(2+)-binding site is contributed by Asp-756. Intrachain disulfides connect Cys-775–Cys-785 and Cys-779–Cys-807. N-linked (GlcNAc...) asparagine glycosylation occurs at Asn-776. Residues Thr-839, Tyr-841, Asp-843, and Ser-845 each coordinate Ca(2+). An N-linked (GlcNAc...) asparagine glycan is attached at Asn-894. 2 residues coordinate heme b: Glu-913 and His-1008. An LRR 7 repeat occupies 1085–1109 (ALDLAALNIQRGRDHGLPSWTEYRK). 2 disulfides stabilise this stretch: Cys-1111–Cys-1168 and Cys-1209–Cys-1236. N-linked (GlcNAc...) asparagine glycans are attached at residues Asn-1112 and Asn-1128. The LRR 8 repeat unit spans residues 1204-1225 (LSKIICTNGDDIDRIQRDIFVY). Residue Asn-1228 is glycosylated (N-linked (GlcNAc...) asparagine). The tract at residues 1266 to 1297 (IGGDEKAKRRKRRHHHSKKSCHDKGKRRKSGD) is disordered. Residues 1273–1295 (KRRKRRHHHSKKSCHDKGKRRKS) are compositionally biased toward basic residues. An N-linked (GlcNAc...) asparagine glycan is attached at Asn-1300.

Belongs to the peroxidase family. XPO subfamily. Requires Ca(2+) as cofactor. The cofactor is heme b. As to expression, expressed in vulval muscles and in some neurons including PVQ. Expressed in the hypodermis and in coelomocytes.

It localises to the secreted. The protein localises to the extracellular space. It is found in the extracellular matrix. Its subcellular location is the basement membrane. The catalysed reaction is L-lysyl-[collagen] + L-methionyl-[collagen] + H2O2 = [collagen]-L-lysyl-N-S-L-methionyl-[collagen] + 2 H2O + H(+). The enzyme catalyses bromide + H2O2 = hypobromite + H2O. It carries out the reaction L-lysyl-[collagen] + L-methionyl-[collagen] + hypobromite = [collagen]-L-lysyl-N-S-L-methionyl-[collagen] + bromide + H2O + H(+). It catalyses the reaction L-tyrosyl-[protein] + bromide + H2O2 + H(+) = 3-bromo-L-tyrosyl-[protein] + 2 H2O. The catalysed reaction is hypobromite + L-tyrosyl-[protein] + H(+) = 3-bromo-L-tyrosyl-[protein] + H2O. Functionally, catalyzes the two-electron oxidation of bromide by hydrogen peroxide and generates hypobromite as a reactive intermediate which mediates the formation of sulfilimine cross-links between methionine and hydroxylysine residues within an uncross-linked collagen IV/COL4A1 NC1 hexamer. Required for embryonic morphogenesis playing a role in epidermal elongation at the twofold stage of embryonic development. Required post-embryonically for basement membrane integrity and muscle-epidermal attachments, and specifically in the function of basement membrane components such as the type IV collagens. May have a role in inhibiting axon regeneration. May functionally antagonize the peroxidasin pxn-1. The sequence is that of Peroxidasin homolog pxn-2 from Caenorhabditis elegans.